Consider the following 717-residue polypeptide: Aryl hydrocarbon receptor nuclear translocator 2 (717 aa).

Disordered regions lie at residues 1 to 20 (MATP…PGSV) and 35 to 74 (MAGA…IERR). Arg-42 is modified (omega-N-methylarginine). Basic and acidic residues predominate over residues 63 to 73 (FSRENHSEIER). The bHLH domain occupies 63–116 (FSRENHSEIERRRRNKMTQYITELSDMVPTCSALARKPDKLTILRMAVSHMKSM). 2 consecutive PAS domains span residues 134 to 209 (TEQE…MTGR) and 323 to 393 (PVCM…VKLK). In terms of domain architecture, PAC spans 398-441 (SVMYRFRTKNREWMLIRTSSFTFQNPYSDEIEYIICTNTNVKQL). Residues 548-717 (NDIQSSSSTG…DLGMFPPFSE (170 aa)) are disordered. 2 stretches are compositionally biased toward polar residues: residues 549-574 (DIQS…QVAW) and 585-605 (QIPS…TSHT). Residues 610–625 (PSSYSPLSSPATSSPS) are compositionally biased toward low complexity. Positions 642–651 (SGQSSGQFQG) are enriched in polar residues. Residues 658-680 (SQWQSQHHGQQSGEQHSHQQPGQ) show a composition bias toward low complexity.

In terms of assembly, efficient DNA binding requires dimerization with another bHLH protein. Heterodimer with NPAS4. Heterodimer with SIM1. Heterodimer with the aryl hydrocarbon receptor (AHR) or the SIM1 protein. Interacts with TACC3.

Its subcellular location is the nucleus. Transcription factor that plays a role in the development of the hypothalamo-pituitary axis, postnatal brain growth, and visual and renal function. Specifically recognizes the xenobiotic response element (XRE). This chain is Aryl hydrocarbon receptor nuclear translocator 2 (ARNT2), found in Homo sapiens (Human).